The following is a 23-amino-acid chain: Acidic phospholipase A2 CHA-E6b (23 aa).

Belongs to the phospholipase A2 family. Group II subfamily. D49 sub-subfamily. It depends on Ca(2+) as a cofactor. In terms of processing, contains 7 disulfide bonds. In terms of tissue distribution, expressed by the venom gland.

The protein localises to the secreted. The enzyme catalyses a 1,2-diacyl-sn-glycero-3-phosphocholine + H2O = a 1-acyl-sn-glycero-3-phosphocholine + a fatty acid + H(+). In terms of biological role, snake venom phospholipase A2 (PLA2) that shows high lipolytic (1200 umol/mg/min) and weak ADP-induced platelet aggregation activities. Also shows weak anticoagulant activity (IC(50) of about 1.0 uM). PLA2 catalyzes the calcium-dependent hydrolysis of the 2-acyl groups in 3-sn-phosphoglycerides. This is Acidic phospholipase A2 CHA-E6b from Crotalus horridus (Timber rattlesnake).